Here is a 378-residue protein sequence, read N- to C-terminus: MSGSDKLPGLASDAVLKQSIPVPDSFVEIKGIDYSKDSAYNMKAVDLIESMKNMGFQASSVSQACEIINGMRSWRGKHIDSLPEHERTGEFDDEGYQKSTIFMGYTSNLISSGLRDTLRFLVQHKMVSAIVSSAGGIEEDLIKVLAPTYMGEFSLPGKGLRDQGMNRIGNLLVPNDNYCKFEEWIVPILDKCLEEQEEGMKKMGSDGLNADSPACWTPSKLINRLGKEINDESSVLYWAHKNDIPVFCPALTDGSIGDMLFFHTFKASPQQIRLDIVADIRKLNSMSMAASNAGMILLGGGLIKHHICNACLMRNGADYAVYINTGQEFDGSDAGARPDEAISWGKIKAEAKQVKVYADASIVFPLIVAATFASEKPN.

Residues 107–111, 133–135, E139, and D253 contribute to the NAD(+) site; these read SNLIS and SAG. Residue 138–139 participates in spermidine binding; sequence EE. D258 is a binding site for spermidine. G300 contacts NAD(+). H305 lines the spermidine pocket. 325 to 326 contributes to the NAD(+) binding site; the sequence is TG. Residues 331–333 and 340–346 each bind spermidine; these read GSD and EAISWGK. The active-site Nucleophile is K346. Residue 359–360 coordinates NAD(+); sequence DA.

This sequence belongs to the deoxyhypusine synthase family. The cofactor is NAD(+).

The catalysed reaction is [eIF5A protein]-L-lysine + spermidine = [eIF5A protein]-deoxyhypusine + propane-1,3-diamine. It participates in protein modification; eIF5A hypusination. Functionally, catalyzes the NAD-dependent oxidative cleavage of spermidine and the subsequent transfer of the butylamine moiety of spermidine to the epsilon-amino group of a specific lysine residue of the eIF-5A precursor protein to form the intermediate deoxyhypusine residue. This is Deoxyhypusine synthase (DYS1) from Debaryomyces hansenii (strain ATCC 36239 / CBS 767 / BCRC 21394 / JCM 1990 / NBRC 0083 / IGC 2968) (Yeast).